Here is a 309-residue protein sequence, read N- to C-terminus: Isethionate sulfite-lyase activating enzyme (309 aa).

Positions 22 to 309 constitute a Radical SAM core domain; it reads HDGPGIRTVV…VVAAEHATDG (288 aa). [4Fe-4S] cluster-binding residues include cysteine 36, cysteine 40, cysteine 43, cysteine 62, cysteine 68, cysteine 71, cysteine 75, cysteine 95, cysteine 98, cysteine 102, and cysteine 106. 42–44 is an S-adenosyl-L-methionine binding site; the sequence is WCS. 4Fe-4S ferredoxin-type domains follow at residues 53–85 and 86–117; these read IELA…RADD and DTIS…YGTT. S-adenosyl-L-methionine-binding positions include glycine 146, 195–197, and histidine 268; that span reads DIK.

Belongs to the organic radical-activating enzymes family. In terms of assembly, monomer. The cofactor is [4Fe-4S] cluster.

It carries out the reaction glycyl-[protein] + reduced [flavodoxin] + S-adenosyl-L-methionine = glycin-2-yl radical-[protein] + semiquinone [flavodoxin] + 5'-deoxyadenosine + L-methionine + H(+). The protein operates within organosulfur degradation; alkanesulfonate degradation. Involved in an anaerobic respiration pathway that converts the sulfonate isethionate (2-hydroxyethanesulfonate) to ammonia, acetate and sulfide. Catalyzes activation of the isethionate sulfite-lyase IslA under anaerobic conditions by generation of an organic free radical on a glycine residue, via a homolytic cleavage of S-adenosyl-L-methionine (SAM). The sequence is that of Isethionate sulfite-lyase activating enzyme from Oleidesulfovibrio alaskensis (strain ATCC BAA-1058 / DSM 17464 / G20) (Desulfovibrio alaskensis).